The primary structure comprises 146 residues: Villin-like protein ABP41 (146 aa).

The protein belongs to the villin/gelsolin family. In terms of assembly, binds to actin. As to expression, expressed in pollen (at protein level).

It localises to the cytoplasm. It is found in the cytoskeleton. Functionally, ca(2+)-dependent actin filament-severing protein that is required for pollen tube growth. Probably regulates the dynamics of the actin cytoskeleton. It can promote the assembly of monomers into filaments (nucleation) as well as sever filaments already formed. The sequence is that of Villin-like protein ABP41 from Lilium davidii (David's lily).